The chain runs to 66 residues: U1-theraphotoxin-Cg1b (66 aa).

An N-terminal signal peptide occupies residues 1-21 (MKTSALFVIFGLVLLFCNSFA). Residues 22-29 (AELKTTGR) constitute a propeptide that is removed on maturation. 3 cysteine pairs are disulfide-bonded: Cys31–Cys46, Cys38–Cys51, and Cys45–Cys58.

Belongs to the neurotoxin 10 (Hwtx-1) family. 46 (Jztx-7/10/12) subfamily. In terms of tissue distribution, expressed by the venom gland.

Its subcellular location is the secreted. Functionally, probable ion channel inhibitor. In Chilobrachys guangxiensis (Chinese earth tiger tarantula), this protein is U1-theraphotoxin-Cg1b.